The chain runs to 216 residues: MAAQGEPQVQFKVVLVGDGGTGKTTFMKRHLTGEFEKEYVATLGVEVHTLVFHTNRGPIKFNVWDTAGQEKFGGLRDGYYIQAQCAIIMFDVTSRVTYKNVPSWHKDLVRVCENIPIVLCGNKVDVKDMKVKAKPILFHRKKNLQYYDISARSNYNFEKPFFWLARKLIGDPNLEFVAMPALAPPEVVMDPALAAQYEHDLEVAQTTALPDEEDDL.

A2 carries the post-translational modification N-acetylalanine. One can recognise a Small GTPase Ran-type domain in the interval 7–171 (PQVQFKVVLV…FWLARKLIGD (165 aa)). 17 to 24 (GDGGTGKT) contributes to the GTP binding site. A Phosphothreonine modification is found at T24. Residues 37-45 (KEYVATLGV) are switch-I. K60 is modified (N6-acetyllysine). Position 65–69 (65–69 (DTAGQ)) interacts with GTP. Residues 68 to 84 (GQEKFGGLRDGYYIQAQ) are switch-II. N6-acetyllysine; alternate is present on K71. A Glycyl lysine isopeptide (Lys-Gly) (interchain with G-Cter in SUMO2); alternate cross-link involves residue K71. K71 participates in a covalent cross-link: Glycyl lysine isopeptide (Lys-Gly) (interchain with G-Cter in ubiquitin); alternate. An N6-acetyllysine modification is found at K99. 122 to 125 (NKVD) provides a ligand contact to GTP. An N6-acetyllysine modification is found at K134. N6-acetyllysine; alternate is present on K159. N6-succinyllysine; alternate is present on K159.

The protein belongs to the small GTPase superfamily. Ran family. As to expression, testis specific.

It is found in the nucleus. It carries out the reaction GTP + H2O = GDP + phosphate + H(+). In terms of biological role, GTP-binding protein involved in nucleocytoplasmic transport. Required for the import of protein into the nucleus and also for RNA export. Involved in chromatin condensation and control of cell cycle. The polypeptide is GTP-binding nuclear protein Ran, testis-specific isoform (Rasl2-9) (Mus musculus (Mouse)).